Here is a 458-residue protein sequence, read N- to C-terminus: Tyrosine phenol-lyase (458 aa).

N6-(pyridoxal phosphate)lysine is present on Lys258.

This sequence belongs to the beta-eliminating lyase family. Homotetramer. Requires pyridoxal 5'-phosphate as cofactor.

The enzyme catalyses L-tyrosine + H2O = phenol + pyruvate + NH4(+). This Symbiobacterium thermophilum (strain DSM 24528 / JCM 14929 / IAM 14863 / T) protein is Tyrosine phenol-lyase (tpl).